The primary structure comprises 139 residues: Arsenate reductase (139 aa).

Residues cysteine 10, cysteine 82, and cysteine 89 each act as nucleophile in the active site. Intrachain disulfides connect cysteine 10-cysteine 82 and cysteine 82-cysteine 89.

Belongs to the low molecular weight phosphotyrosine protein phosphatase family. Thioredoxin-coupled ArsC subfamily.

It is found in the cytoplasm. The enzyme catalyses arsenate + [thioredoxin]-dithiol + H(+) = arsenite + [thioredoxin]-disulfide + H2O. Functionally, catalyzes the reduction of arsenate [As(V)] to arsenite [As(III)]. This chain is Arsenate reductase, found in Bacillus licheniformis (strain ATCC 14580 / DSM 13 / JCM 2505 / CCUG 7422 / NBRC 12200 / NCIMB 9375 / NCTC 10341 / NRRL NRS-1264 / Gibson 46).